We begin with the raw amino-acid sequence, 132 residues long: Small ribosomal subunit protein uS11 (132 aa).

The protein belongs to the universal ribosomal protein uS11 family. As to quaternary structure, part of the 30S ribosomal subunit.

Its function is as follows. Located on the platform of the 30S subunit. The sequence is that of Small ribosomal subunit protein uS11 (rps11) from Korarchaeum cryptofilum (strain OPF8).